We begin with the raw amino-acid sequence, 512 residues long: Secreted triacylglycerol lipase LIP5 (512 aa).

A signal peptide spans Met-1 to Ala-17. Cysteines 118 and 292 form a disulfide. Ser-203 functions as the Nucleophile in the catalytic mechanism. An N-linked (GlcNAc...) asparagine glycan is attached at Asn-316. The active site involves Asp-352. N-linked (GlcNAc...) asparagine glycosylation occurs at Asn-361. The active site involves His-386. Asn-453 carries N-linked (GlcNAc...) asparagine glycosylation. Residues Lys-480 to His-512 form a disordered region. The span at Gly-488–Lys-497 shows a compositional bias: basic and acidic residues. A compositionally biased stretch (basic residues) spans Ala-498 to His-512.

Belongs to the AB hydrolase superfamily. Lipase family. Class Lip subfamily.

It localises to the secreted. The catalysed reaction is a triacylglycerol + H2O = a diacylglycerol + a fatty acid + H(+). The enzyme catalyses a monoacylglycerol + H2O = glycerol + a fatty acid + H(+). It carries out the reaction a diacylglycerol + H2O = a monoacylglycerol + a fatty acid + H(+). Functionally, secreted lipase that hydrolyzes acylglycerol lipids such as triacylglycerols and consequently releases free fatty acid. Can hydrolyze 4-nitrophenyl palmitate to release 4-nitrophenol and palmitoic acid. Due to an absence of fatty acid synthase genes in Malassezia species, secretory lipases are essential for the yeast to generate free fatty acids from degradation of sebum and assimilate them as lipid sources for growth. Plays an essential role at the pathogen-host interface during disease progression. The sequence is that of Secreted triacylglycerol lipase LIP5 from Malassezia restricta (strain ATCC 96810 / NBRC 103918 / CBS 7877) (Seborrheic dermatitis infection agent).